The following is a 450-amino-acid chain: Probable helicase D10 (450 aa).

The 146-residue stretch at 95–240 folds into the Helicase ATP-binding domain; the sequence is PIYEECDDTC…MFKDFFGYKI (146 aa). Residue 108 to 115 participates in ATP binding; it reads GKPGFGKT. Positions 193-196 match the DEAH box motif; that stretch reads DEVH. One can recognise a Helicase C-terminal domain in the interval 289 to 439; it reads NLAHLYVNMG…TITMTPEKAV (151 aa).

The catalysed reaction is ATP + H2O = ADP + phosphate + H(+). The chain is Probable helicase D10 (D10) from Escherichia phage T5 (Enterobacteria phage T5).